Reading from the N-terminus, the 116-residue chain is Large ribosomal subunit protein uL18 (116 aa).

It belongs to the universal ribosomal protein uL18 family. Part of the 50S ribosomal subunit; part of the 5S rRNA/L5/L18/L25 subcomplex. Contacts the 5S and 23S rRNAs.

This is one of the proteins that bind and probably mediate the attachment of the 5S RNA into the large ribosomal subunit, where it forms part of the central protuberance. The sequence is that of Large ribosomal subunit protein uL18 from Mycoplasma mycoides subsp. mycoides SC (strain CCUG 32753 / NCTC 10114 / PG1).